Here is an 87-residue protein sequence, read N- to C-terminus: Cell division topological specificity factor (87 aa).

Belongs to the MinE family.

Prevents the cell division inhibition by proteins MinC and MinD at internal division sites while permitting inhibition at polar sites. This ensures cell division at the proper site by restricting the formation of a division septum at the midpoint of the long axis of the cell. This Neisseria gonorrhoeae (strain ATCC 700825 / FA 1090) protein is Cell division topological specificity factor.